The sequence spans 177 residues: Large ribosomal subunit protein uL16m (177 aa).

Belongs to the universal ribosomal protein uL16 family.

The protein resides in the mitochondrion. This chain is Large ribosomal subunit protein uL16m (RPL16), found in Brassica napus (Rape).